A 306-amino-acid polypeptide reads, in one-letter code: tRNA pseudouridine synthase B (306 aa).

Asp-48 functions as the Nucleophile in the catalytic mechanism.

This sequence belongs to the pseudouridine synthase TruB family. Type 1 subfamily.

The catalysed reaction is uridine(55) in tRNA = pseudouridine(55) in tRNA. Its function is as follows. Responsible for synthesis of pseudouridine from uracil-55 in the psi GC loop of transfer RNAs. This chain is tRNA pseudouridine synthase B, found in Chromobacterium violaceum (strain ATCC 12472 / DSM 30191 / JCM 1249 / CCUG 213 / NBRC 12614 / NCIMB 9131 / NCTC 9757 / MK).